A 208-amino-acid chain; its full sequence is MVQRSKSSANWLREHFNDPFVKQAQKDGYRSRASYKLLEIQEKDRLIRPGMSVIDLGAAPGGWSQVTSRLIGGQGRLIASDILEMDSIPDVTFIQGDFTQDEVLQQILQAVGDSHVDLVISDMAPNMSGTPAVDMPRAMFLCELALDLATRVLKPGGDFLIKIFQGEGFDMYLKDVRSKFDKVQMRKPSSSRDRSREQYLLGKGFKGA.

G61, W63, D81, D97, and D122 together coordinate S-adenosyl-L-methionine. K162 (proton acceptor) is an active-site residue.

This sequence belongs to the class I-like SAM-binding methyltransferase superfamily. RNA methyltransferase RlmE family.

It localises to the cytoplasm. It carries out the reaction uridine(2552) in 23S rRNA + S-adenosyl-L-methionine = 2'-O-methyluridine(2552) in 23S rRNA + S-adenosyl-L-homocysteine + H(+). Specifically methylates the uridine in position 2552 of 23S rRNA at the 2'-O position of the ribose in the fully assembled 50S ribosomal subunit. This is Ribosomal RNA large subunit methyltransferase E from Pseudomonas entomophila (strain L48).